We begin with the raw amino-acid sequence, 462 residues long: A-type ATP synthase subunit B (462 aa).

This sequence belongs to the ATPase alpha/beta chains family. Has multiple subunits with at least A(3), B(3), C, D, E, F, H, I and proteolipid K(x).

The protein resides in the cell membrane. In terms of biological role, component of the A-type ATP synthase that produces ATP from ADP in the presence of a proton gradient across the membrane. The B chain is a regulatory subunit. This is A-type ATP synthase subunit B from Methanobrevibacter smithii (strain ATCC 35061 / DSM 861 / OCM 144 / PS).